A 1369-amino-acid polypeptide reads, in one-letter code: Microtubule-associated tumor suppressor candidate 2 (1369 aa).

Disordered stretches follow at residues 180 to 262 (ASSS…TQTV), 374 to 442 (GRGN…FIPN), 477 to 509 (GENK…VAEN), 582 to 627 (NTSP…EERT), 791 to 839 (RSSA…LRPP), 861 to 992 (SSVS…QARE), and 1331 to 1369 (WKLQ…TTPR). Composition is skewed to polar residues over residues 246–262 (PSTS…TQTV) and 392–401 (LHTTPKQGSA). Residues 641 to 980 (RPKIITYIRR…PKQRTAAARN (340 aa)) are mediates interaction with MAPRE1. The sufficient for interaction with KIF2C stretch occupies residues 801-890 (GPITTATSLY…TRSTFGNEEQ (90 aa)). The localization to the growing distal tip of microtubules stretch occupies residues 801–1150 (GPITTATSLY…HDAALLEMEN (350 aa)). A compositionally biased stretch (polar residues) spans 804–814 (TTATSLYSSDP). The span at 821–834 (ASSSNAAKSNLPKS) shows a compositional bias: low complexity. A compositionally biased stretch (basic and acidic residues) spans 937-947 (TKKDAQKDQDT). Residues 991 to 1335 (REAERQLVLR…NEELLWKLQT (345 aa)) are a coiled coil. Positions 1348 to 1369 (SPVYRGSSSGPSSPARVSTTPR) are enriched in low complexity.

The protein in the C-terminal section; belongs to the MTUS1 family. In terms of assembly, homodimer. Interacts with KIF2C and MAPRE1; the interaction is direct and probably targets MTUS2 and KIF2C to microtubules. Detected in embryonic stem cells differentiating to cardiomyocytes.

The protein localises to the cytoplasm. The protein resides in the cytoskeleton. Binds microtubules. Together with MAPRE1 may target the microtubule depolymerase KIF2C to the plus-end of microtubules. May regulate the dynamics of microtubules at their growing distal tip. The chain is Microtubule-associated tumor suppressor candidate 2 (MTUS2) from Homo sapiens (Human).